Reading from the N-terminus, the 469-residue chain is MSSRSDLKIKRVSLIIFLLSVLVEFCYGGFTSEYVRGSDLPDDMPLDSDVFEVPPGPNSPQQVHVTQGNHEGNGVIISWVTPVKPGSKTVQYWCENEKSRKQAEATVNTYRFFNYTSGYIHHCLIDDLEFDTKYYYEIGSGKWSRRFWFFIPPKSGPDVPYTFGLIGDLGQTYDSNSTLSHYEMNPGKGQAVLFVGDLSYADRYPNHDNNRWDTWGRFVERSVAYQPWIWTAGNHEIDFVPDIGEIEPFKPFMNRYHTPHKASGSISPLWYSIKRASAYIIVMSCYSSYGIYTPQYKWLEKELQGVNRTETPWLIVLVHSPFYSSYVHHYMEGETLRVMYEQWFVKYKVDVVFAGHVHAYERSERVSNIAYNIVNGLCEPISDESAPIYITIGDGGNSEGLLTDMMQPQPKYSAFREASFGHGLLEIKNRTHAYFSWNRNQDGNAVAADSVWLLNRFWRAQKKTWLDAF.

The signal sequence occupies residues 1-28 (MSSRSDLKIKRVSLIIFLLSVLVEFCYG). Residue N114 is glycosylated (N-linked (GlcNAc...) asparagine). D168 lines the Fe cation pocket. N-linked (GlcNAc...) asparagine glycosylation is present at N176. Residues D197 and Y200 each contribute to the Fe cation site. Residue D197 participates in Zn(2+) binding. N234 lines the Zn(2+) pocket. N234 serves as a coordination point for substrate. A glycan (N-linked (GlcNAc...) asparagine) is linked at N307. A Zn(2+)-binding site is contributed by H319. The active-site Proton donor is H329. H356 contributes to the Zn(2+) binding site. 356–358 (HVH) is a substrate binding site. Residue H358 coordinates Fe cation. N429 is a glycosylation site (N-linked (GlcNAc...) asparagine).

This sequence belongs to the metallophosphoesterase superfamily. Purple acid phosphatase family. In terms of assembly, homodimer; disulfide-linked. Fe cation serves as cofactor. The cofactor is Zn(2+). In terms of tissue distribution, expressed in roots, stems, leaves, flowers and siliques.

It localises to the secreted. The enzyme catalyses a phosphate monoester + H2O = an alcohol + phosphate. In Arabidopsis thaliana (Mouse-ear cress), this protein is Fe(3+)-Zn(2+) purple acid phosphatase 12 (PAP12).